The chain runs to 127 residues: Probable toxin y4kH (127 aa).

This sequence belongs to the MbcT/ParT/Res family.

Its function is as follows. Probable toxic component of a type II toxin-antitoxin (TA) system. It is not known which gene encodes its antitoxin. The sequence is that of Probable toxin y4kH from Sinorhizobium fredii (strain NBRC 101917 / NGR234).